Here is a 173-residue protein sequence, read N- to C-terminus: Co-chaperone protein HscB homolog (173 aa).

In terms of domain architecture, J spans 5–77 (CHFALFELKP…PKRARYLLAM (73 aa)).

The protein belongs to the HscB family. Interacts with HscA and stimulates its ATPase activity.

In terms of biological role, co-chaperone involved in the maturation of iron-sulfur cluster-containing proteins. Seems to help targeting proteins to be folded toward HscA. The polypeptide is Co-chaperone protein HscB homolog (Pseudomonas syringae pv. tomato (strain ATCC BAA-871 / DC3000)).